Consider the following 81-residue polypeptide: Centromere protein X (81 aa).

An N-acetylmethionine modification is found at M1.

This sequence belongs to the CENP-X/MHF2 family. In terms of assembly, heterodimer with CENPX, sometimes called MHF; this interaction stabilizes both partners. MHF heterodimers can assemble to form tetrameric structures. MHF also coassemble with CENPT-CENPW heterodimers at centromeres to form the tetrameric CENP-T-W-S-X complex. Forms a discrete complex with FANCM and CENPX, called FANCM-MHF; this interaction, probably mediated by direct binding between CENPS and FANCM, leads to synergistic activation of double-stranded DNA binding and strongly stimulates FANCM-mediated DNA remodeling. Recruited by FANCM to the Fanconi anemia (FA) core complex, which consists of CENPS, CENPX, FANCA, FANCB, FANCC, FANCE, FANCF, FANCG, FANCL, FANCM, FAAP24 and FAAP100. The FA core complex associates with Bloom syndrome (BLM) complex, which consists of at least BLM, DNA topoisomerase 3-alpha (TOP3A), RMI1/BLAP75, RPA1/RPA70 and RPA2/RPA32. The super complex between FA and BLM is called BRAFT.

It is found in the nucleus. The protein localises to the chromosome. The protein resides in the centromere. It localises to the kinetochore. DNA-binding component of the Fanconi anemia (FA) core complex. Required for the normal activation of the FA pathway, leading to monoubiquitination of the FANCI-FANCD2 complex in response to DNA damage, cellular resistance to DNA cross-linking drugs, and prevention of chromosomal breakage. In complex with CENPS (MHF heterodimer), crucial cofactor for FANCM in both binding and ATP-dependent remodeling of DNA. Stabilizes FANCM. In complex with CENPS and FANCM (but not other FANC proteins), rapidly recruited to blocked forks and promotes gene conversion at blocked replication forks. In complex with CENPS, CENPT and CENPW (CENP-T-W-S-X heterotetramer), involved in the formation of a functional kinetochore outer plate, which is essential for kinetochore-microtubule attachment and faithful mitotic progression. As a component of MHF and CENP-T-W-S-X complexes, binds DNA and bends it to form a nucleosome-like structure. DNA-binding function is fulfilled in the presence of CENPS, with the following preference for DNA substates: Holliday junction &gt; double-stranded &gt; splay arm &gt; single-stranded. Does not bind DNA on its own. In Pongo abelii (Sumatran orangutan), this protein is Centromere protein X (CENPX).